The chain runs to 217 residues: Orotate phosphoribosyltransferase (217 aa).

Lys-26 contributes to the 5-phospho-alpha-D-ribose 1-diphosphate binding site. 34–35 (FF) provides a ligand contact to orotate. Residues 72–73 (YK), Arg-99, Lys-100, Lys-103, His-105, and 124–132 (DDVITAGTA) each bind 5-phospho-alpha-D-ribose 1-diphosphate. 2 residues coordinate orotate: Thr-128 and Arg-156.

The protein belongs to the purine/pyrimidine phosphoribosyltransferase family. PyrE subfamily. As to quaternary structure, homodimer. Requires Mg(2+) as cofactor.

It carries out the reaction orotidine 5'-phosphate + diphosphate = orotate + 5-phospho-alpha-D-ribose 1-diphosphate. Its pathway is pyrimidine metabolism; UMP biosynthesis via de novo pathway; UMP from orotate: step 1/2. In terms of biological role, catalyzes the transfer of a ribosyl phosphate group from 5-phosphoribose 1-diphosphate to orotate, leading to the formation of orotidine monophosphate (OMP). The polypeptide is Orotate phosphoribosyltransferase (Aeromonas salmonicida (strain A449)).